The sequence spans 253 residues: Ribosomal RNA small subunit methyltransferase G (253 aa).

S-adenosyl-L-methionine is bound by residues glycine 84, leucine 89, 136–137 (IE), and arginine 155.

It belongs to the methyltransferase superfamily. RNA methyltransferase RsmG family.

The protein localises to the cytoplasm. Functionally, specifically methylates the N7 position of a guanine in 16S rRNA. This Prochlorococcus marinus (strain SARG / CCMP1375 / SS120) protein is Ribosomal RNA small subunit methyltransferase G.